Here is a 499-residue protein sequence, read N- to C-terminus: Aspartyl/glutamyl-tRNA(Asn/Gln) amidotransferase subunit B (499 aa).

Belongs to the GatB/GatE family. GatB subfamily. Heterotrimer of A, B and C subunits.

It catalyses the reaction L-glutamyl-tRNA(Gln) + L-glutamine + ATP + H2O = L-glutaminyl-tRNA(Gln) + L-glutamate + ADP + phosphate + H(+). The catalysed reaction is L-aspartyl-tRNA(Asn) + L-glutamine + ATP + H2O = L-asparaginyl-tRNA(Asn) + L-glutamate + ADP + phosphate + 2 H(+). Allows the formation of correctly charged Asn-tRNA(Asn) or Gln-tRNA(Gln) through the transamidation of misacylated Asp-tRNA(Asn) or Glu-tRNA(Gln) in organisms which lack either or both of asparaginyl-tRNA or glutaminyl-tRNA synthetases. The reaction takes place in the presence of glutamine and ATP through an activated phospho-Asp-tRNA(Asn) or phospho-Glu-tRNA(Gln). This is Aspartyl/glutamyl-tRNA(Asn/Gln) amidotransferase subunit B from Bartonella quintana (strain Toulouse) (Rochalimaea quintana).